The sequence spans 530 residues: MQQALEQALDRAEYIVESAQQRPPKRKCLSSGRKSIFQKLYDLYVEECEKEPEVKKLRRNVNLLEKLVMQETLSCLVVNLYPGNEGYSLMLRGKNGSDSETIRLPYEEGELLEYLDAEELPPILVDLLEKSQVNIFHCGCVIAEIRDYRQSSNMKSPGYQSRHILLRPTMQTLVCDVHSITSDNHKWTQEDKLLLESQLILATAEPLCLDPSVAVACTANRLLYNRQKMNTRPMKRCLKRYSRSSLNRQQDLSHCPPPPQLRLLDFLQKRKERKAGQHYDLKISKAGNCVDMWKRSPCNLAVPSEVDVEKYAKVEKSIKSDDSQPTMWPAHDVKDDYVFECEGGNQYQKTKLTILQSLGDPLYYGKIQPWKADEESDSQMSPSHSSADDHSNWFIIGSKTDAERVVNQYQELVQNEAKCPVKMSHSSSGSASLNSGEEGEPETSSIQSSVLGKGVKHRPPPIKLPSSSGNSSSGNYFTAQQASSFLKSPTPPPPSSKPSLSRKSSVDLSQVSMLSPAALSPASSSQRHES.

Ser-296 carries the post-translational modification Phosphoserine. Residues 419 to 530 (CPVKMSHSSS…PASSSQRHES (112 aa)) are disordered. 2 stretches are compositionally biased toward low complexity: residues 424–436 (SHSSSGSASLNSG) and 466–475 (SSSGNSSSGN). Thr-490 is modified (phosphothreonine). Residues 514 to 530 (LSPAALSPASSSQRHES) are compositionally biased toward low complexity. 2 positions are modified to phosphoserine: Ser-515 and Ser-520.

This sequence belongs to the SPT20 family. Interacts with ATG9A. Interacts with MAPK14.

Its function is as follows. Required for MAP kinase p38 (MAPK11, MAPK12, MAPK13 and/or MAPK14) activation during gastrulation. Required for down-regulation of E-cadherin during gastrulation by regulating E-cadherin protein level downstream from NCK-interacting kinase (NIK) and independently of the regulation of transcription by FGF signaling and Snail. Required for starvation-induced ATG9A trafficking during autophagy. This chain is Transcription factor SPT20 homolog (Supt20h), found in Rattus norvegicus (Rat).